The sequence spans 329 residues: DNA-directed RNA polymerase subunit alpha (329 aa).

The tract at residues 1–231 is alpha N-terminal domain (alpha-NTD); it reads MQNSLLKPKA…EQLAVFAQLE (231 aa). The tract at residues 249–329 is alpha C-terminal domain (alpha-CTD); that stretch reads FDPILLRPVD…SWPPAALEKR (81 aa).

This sequence belongs to the RNA polymerase alpha chain family. Homodimer. The RNAP catalytic core consists of 2 alpha, 1 beta, 1 beta' and 1 omega subunit. When a sigma factor is associated with the core the holoenzyme is formed, which can initiate transcription.

The catalysed reaction is RNA(n) + a ribonucleoside 5'-triphosphate = RNA(n+1) + diphosphate. DNA-dependent RNA polymerase catalyzes the transcription of DNA into RNA using the four ribonucleoside triphosphates as substrates. The sequence is that of DNA-directed RNA polymerase subunit alpha from Albidiferax ferrireducens (strain ATCC BAA-621 / DSM 15236 / T118) (Rhodoferax ferrireducens).